A 134-amino-acid polypeptide reads, in one-letter code: Putative oxidoreductase CatD (134 aa).

4 helical membrane-spanning segments follow: residues Phe-5–Leu-25, Phe-46–Leu-66, Ile-70–Ala-90, and Pro-91–Leu-111.

This sequence belongs to the DoxX family.

The protein localises to the cell membrane. Its function is as follows. Essential for growth and viability in the presence of catechol and probably involved in the detoxification of catechol. The sequence is that of Putative oxidoreductase CatD (catD) from Bacillus subtilis (strain 168).